Reading from the N-terminus, the 507-residue chain is Keratin, type II cuticular Hb5 (507 aa).

The interval 1–123 (MSCRSYRISS…PNAQCVKQEE (123 aa)) is head. The IF rod domain occupies 123–434 (EKEQIKSLNS…RLLEGEEHRL (312 aa)). Positions 124-158 (KEQIKSLNSRFAAFIDKVRFLEQQNKLLETKWQFY) are coil 1A. The tract at residues 159-168 (QNQRCCESNL) is linker 1. The coil 1B stretch occupies residues 169–269 (EPLFSGYIET…YEEEIRVLQA (101 aa)). Residue Lys-229 forms a Glycyl lysine isopeptide (Lys-Gly) (interchain with G-Cter in SUMO1) linkage. Residues 270 to 286 (HISDTSVIVKMDNSRDL) are linker 12. The tract at residues 287 to 430 (NMDCIIAEIK…ATYRRLLEGE (144 aa)) is coil 2. The interval 431 to 507 (EHRLCEGVGS…CGSSRSVRFA (77 aa)) is tail.

The protein belongs to the intermediate filament family. Heterotetramer of two type I and two type II keratins. Synthesis occurs immediately above a small population of matrix cells at the base of the hair bulb and the trichocytes lining the dermal papilla and extends upward through the matrix and ends in the lower part of the cortex of the hair shaft.

The chain is Keratin, type II cuticular Hb5 (KRT85) from Homo sapiens (Human).